Reading from the N-terminus, the 364-residue chain is Acidic fibroblast growth factor intracellular-binding protein (364 aa).

Position 2 is an N-acetylthreonine (Thr2).

As to quaternary structure, binds to internalized FGF1; this interaction is increased in the presence of CSNKB, suggesting a possible cooperative interaction between CSNKB and FIBP in binding to FGF1. In terms of tissue distribution, highly expressed in heart, skeletal muscle and pancreas. Expressed at lower levels in brain. Also found in placenta, liver and kidney.

The protein localises to the nucleus. It is found in the endomembrane system. Functionally, may be involved in mitogenic function of FGF1. May mediate with IER2 FGF-signaling in the establishment of laterality in the embryo. The polypeptide is Acidic fibroblast growth factor intracellular-binding protein (FIBP) (Homo sapiens (Human)).